The sequence spans 167 residues: Large ribosomal subunit protein uL10 (167 aa).

This sequence belongs to the universal ribosomal protein uL10 family. Part of the ribosomal stalk of the 50S ribosomal subunit. The N-terminus interacts with L11 and the large rRNA to form the base of the stalk. The C-terminus forms an elongated spine to which L12 dimers bind in a sequential fashion forming a multimeric L10(L12)X complex.

In terms of biological role, forms part of the ribosomal stalk, playing a central role in the interaction of the ribosome with GTP-bound translation factors. The sequence is that of Large ribosomal subunit protein uL10 from Dichelobacter nodosus (strain VCS1703A).